Reading from the N-terminus, the 753-residue chain is Oligopeptide transporter 5 (753 aa).

Transmembrane regions (helical) follow at residues 56–76 (TWFL…FFGY), 80–100 (PLTV…KLMA), 132–152 (ITIF…LTIV), 163–183 (AAAM…AGMF), 224–244 (FFLI…YLFP), 296–316 (FFAI…ILPI), 368–388 (YLSI…TATI), 432–452 (WWFV…CEGF), 461–481 (WGLL…GVIL), 506–528 (PLAN…YFVG), 544–564 (FIVQ…TTWW), 583–603 (PWTC…GIIG), 615–635 (PGMN…WFFA), 662–682 (AKAV…YYIF), and 695–715 (ILSA…YFAL).

It belongs to the oligopeptide OPT transporter (TC 2.A.67.1) family. As to expression, expressed predominantly in flowers, and at a very low level in leaves and roots.

It is found in the membrane. Functionally, involved in the translocation of tetra- and pentapeptides across the cellular membrane in an energy-dependent manner. The sequence is that of Oligopeptide transporter 5 (OPT5) from Arabidopsis thaliana (Mouse-ear cress).